We begin with the raw amino-acid sequence, 131 residues long: Small ribosomal subunit protein uS12c (131 aa).

It belongs to the universal ribosomal protein uS12 family. Part of the 30S ribosomal subunit.

It localises to the plastid. The protein resides in the chloroplast. Its function is as follows. With S4 and S5 plays an important role in translational accuracy. Located at the interface of the 30S and 50S subunits. This is Small ribosomal subunit protein uS12c (rps12) from Stigeoclonium helveticum (Green alga).